The sequence spans 239 residues: Small ribosomal subunit protein uS3c (239 aa).

The region spanning 43-139 is the KH type-2 domain; the sequence is IKNYIQKNRK…RFNISIEKVK (97 aa). A disordered region spans residues 50–74; sequence NRKKGSNRKIESDSSSEVITHNRKM.

This sequence belongs to the universal ribosomal protein uS3 family. In terms of assembly, part of the 30S ribosomal subunit.

The protein resides in the plastid. The protein localises to the chloroplast. This Hordeum vulgare (Barley) protein is Small ribosomal subunit protein uS3c (rps3).